The following is a 1192-amino-acid chain: ATP-dependent helicase/deoxyribonuclease subunit B (1192 aa).

The protein belongs to the helicase family. AddB/RexB type 2 subfamily. As to quaternary structure, heterodimer of AddA and RexB. Mg(2+) is required as a cofactor.

Its function is as follows. The heterodimer acts as both an ATP-dependent DNA helicase and an ATP-dependent, dual-direction single-stranded exonuclease. Recognizes the chi site generating a DNA molecule suitable for the initiation of homologous recombination. This subunit has 5' -&gt; 3' nuclease activity but not helicase activity. The polypeptide is ATP-dependent helicase/deoxyribonuclease subunit B (Pediococcus pentosaceus (strain ATCC 25745 / CCUG 21536 / LMG 10740 / 183-1w)).